The chain runs to 367 residues: Nodulation protein 10 (367 aa).

Helical transmembrane passes span 15–37, 46–66, 88–108, 109–129, 155–175, 183–203, 208–228, 245–265, 270–290, 312–332, and 335–355; these read FDLL…WLHL, VFDL…SGFL, IFPA…VTGG, LNVT…LTAA, VLWT…LLEI, GALV…HFNI, NPFL…GVLA, WWLA…AAFI, AAPV…SAAH, MLVM…LWIV, and VGTV…AMKL.

The protein belongs to the acyltransferase 3 family.

It is found in the cell membrane. Its function is as follows. Not known. NodX allows Rhizobium leguminosarum biovar viciae strain TOM to nodulate Afghanistan peas. The protein is Nodulation protein 10 (nodX) of Rhizobium leguminosarum bv. viciae.